The following is a 1035-amino-acid chain: Isoleucine--tRNA ligase (1035 aa).

The 'HIGH' region signature appears at 48–58; sequence PTANGRPHVGH. Positions 589-593 match the 'KMSKS' region motif; that stretch reads KMSKH. Residue lysine 592 coordinates ATP.

The protein belongs to the class-I aminoacyl-tRNA synthetase family. IleS type 2 subfamily. In terms of assembly, monomer. It depends on Zn(2+) as a cofactor.

The protein localises to the cytoplasm. It catalyses the reaction tRNA(Ile) + L-isoleucine + ATP = L-isoleucyl-tRNA(Ile) + AMP + diphosphate. Functionally, catalyzes the attachment of isoleucine to tRNA(Ile). As IleRS can inadvertently accommodate and process structurally similar amino acids such as valine, to avoid such errors it has two additional distinct tRNA(Ile)-dependent editing activities. One activity is designated as 'pretransfer' editing and involves the hydrolysis of activated Val-AMP. The other activity is designated 'posttransfer' editing and involves deacylation of mischarged Val-tRNA(Ile). The sequence is that of Isoleucine--tRNA ligase from Clostridium acetobutylicum (strain ATCC 824 / DSM 792 / JCM 1419 / IAM 19013 / LMG 5710 / NBRC 13948 / NRRL B-527 / VKM B-1787 / 2291 / W).